The following is an 83-amino-acid chain: SQIKFKPSYIELAVVADHGMFTKYNSNINTIRIVHEMVNTVDGFFRTITSFGEWRERDIIPRSCIMASTISKHNPQCIINQPI.

The region spanning 8 to 83 (SYIELAVVAD…NPQCIINQPI (76 aa)) is the Peptidase M12B domain. Glutamate 11, cysteine 77, and asparagine 80 together coordinate Ca(2+).

The protein belongs to the venom metalloproteinase (M12B) family. P-I subfamily. Monomer. It depends on Zn(2+) as a cofactor. As to expression, expressed by the venom gland.

It localises to the secreted. Inhibited by EDTA. Its function is as follows. This protein is a zinc protease from snake venom that is devoid of significant myotoxic and hemorrhagic activities. It hydrolyzes the Aalpha-chain and more slowly the Bbeta-chain of fibrin and fibrinogen, without affecting the gamma-chains. It induces cell detachment and a apoptosis (anoikis) in endothelial cells. The chain is Snake venom metalloproteinase BnP1 from Bothrops pauloensis (Neuwied's lancehead).